Consider the following 79-residue polypeptide: Secretory calcium-binding phosphoprotein proline-glutamine rich 1 (79 aa).

Residues 1–15 (MKFLILAGLLSTATA) form the signal peptide.

It localises to the secreted. Tooth-associated epithelia protein that may participate in structuring the basal lamina at cell-tooth interface. The chain is Secretory calcium-binding phosphoprotein proline-glutamine rich 1 from Homo sapiens (Human).